A 1589-amino-acid polypeptide reads, in one-letter code: Centrosomal protein of 170 kDa protein B (1589 aa).

One can recognise an FHA domain in the interval 23–73 (IFVGREECELMLQSRSVDKQHAVINYDQDRDEHWVKDLGSLNGTFVNDMRI). 4 disordered regions span residues 130–261 (RSEA…GAAP), 287–309 (ITKFSLRQRRPPGKEATPGEMVS), 325–388 (LLHR…RLQR), and 409–583 (FDED…EVEE). Composition is skewed to basic and acidic residues over residues 147-156 (RPEKGDRRPG) and 243-253 (PAHEMPTKDAE). A compositionally biased stretch (basic and acidic residues) spans 330–344 (GPGDDRHSTKSDLPV). A phosphoserine mark is found at S360 and S421. 2 stretches are compositionally biased toward basic and acidic residues: residues 430–446 (PKADKRRGPTPADRDRP) and 467–476 (LKREKTEERL). Positions 478 to 489 (SPSPASRTPARP) are enriched in low complexity. Phosphoserine is present on residues S480 and S492. Over residues 520–530 (EKVPPVLPAPL) the composition is skewed to pro residues. S536 carries the phosphoserine modification. The segment covering 538–548 (VGPPTPPPAPT) has biased composition (pro residues). Residue T542 is modified to Phosphothreonine. Phosphoserine occurs at positions 597, 619, 655, 711, 721, 746, 748, 751, 753, 772, 829, 853, 954, 972, 986, and 988. 4 disordered regions span residues 598–895 (PELS…LQDL), 934–1316 (DAEC…PYGF), 1350–1374 (DGDTLGSSEPAHSASLSNMPSTPAS), and 1532–1552 (AQPGLGKGRVAAQSPPSPASA). The segment covering 711-722 (SPAGPESSRRSG) has biased composition (low complexity). A compositionally biased stretch (polar residues) spans 957–972 (DTASTVSLRSGKSGPS). A compositionally biased stretch (basic residues) spans 1029–1038 (SAIRRGHRPR). A phosphoserine mark is found at S1135, S1179, and S1199. A compositionally biased stretch (polar residues) spans 1221–1230 (AANTATTTGP). The segment covering 1286–1301 (PRAGSSSRARSRAPGP) has biased composition (low complexity). T1304 is modified (phosphothreonine). S1356 and S1362 each carry phosphoserine. Residues 1363 to 1374 (ASLSNMPSTPAS) are compositionally biased toward polar residues. Residues 1542–1552 (AAQSPPSPASA) show a composition bias toward low complexity. 2 positions are modified to phosphoserine: S1545 and S1548.

It belongs to the CEP170 family.

It localises to the cytoplasm. It is found in the cytoskeleton. In terms of biological role, plays a role in microtubule organization. The chain is Centrosomal protein of 170 kDa protein B (CEP170B) from Homo sapiens (Human).